We begin with the raw amino-acid sequence, 133 residues long: Bacteriohemerythrin (133 aa).

His-19, His-56, Glu-60, His-75, His-79, His-115, and Asp-120 together coordinate Fe cation.

Belongs to the hemerythrin family. In terms of assembly, monomer.

Oxygen-binding protein. May be involved in a storage mechanism or for delivery to oxygen-requiring enzymes. The oxygen-binding site contains two iron atoms. The chain is Bacteriohemerythrin from Campylobacter jejuni subsp. jejuni serotype O:23/36 (strain 81-176).